The chain runs to 443 residues: EGF-containing fibulin-like extracellular matrix protein 2 (443 aa).

Positions 1 to 25 (MLPFASCLPGSLLLWALLLLLLGAA) are cleaved as a signal peptide. The 46-residue stretch at 36-81 (YTECTDGYEWDADSQHCRDVNECLTIPEACKGEMKCINHYGGYLCL) folds into the EGF-like 1; atypical domain. 18 cysteine pairs are disulfide-bonded: C58/C121, C65/C80, C71/C109, C127/C140, C134/C149, C151/C162, C168/C177, C173/C186, C188/C201, C207/C217, C213/C226, C228/C241, C247/C258, C254/C267, C269/C281, C287/C300, C294/C309, and C315/C327. The region spanning 123 to 163 (DVDECAQALHDCRPSQDCHNLPGSYQCTCPDGYRKVGPECV) is the EGF-like 2; calcium-binding domain. In terms of domain architecture, EGF-like 3; calcium-binding spans 164–202 (DIDECRYRYCQHRCVNLPGSFRCQCEPGFQLGPNNRSCV). N-linked (GlcNAc...) asparagine glycosylation occurs at N198. The EGF-like 4; calcium-binding domain maps to 203 to 242 (DVNECDMGAPCEQRCFNSYGTFLCRCNQGYELHRDGFSCS). The EGF-like 5; calcium-binding domain maps to 243–282 (DIDECSYSSYLCQYRCVNEPGRFSCHCPQGYQLLATRLCQ). The region spanning 283–328 (DIDECETGAHQCSEAQTCVNFHGGYRCVDTNRCVEPYVQVSDNRCF) is the EGF-like 6; calcium-binding domain. A glycan (N-linked (GlcNAc...) asparagine) is linked at N394.

This sequence belongs to the fibulin family. In terms of assembly, homodimer; disulfide-linked. Multimer; allows heparin binding. Monomer. Interacts with FBN1 (via N-terminal domain); this interaction inhibits EFEMP2 binding to LOX and ELN. Interacts with LOX (via propeptide); this interaction is strong and facilitates formation of ternary complexes with ELN during elastic fiber assembly; this interaction limits interaction of EFEMP2 with FBLN5. Interacts with PITX2. Interacts with ELN with moderate affinity; this interaction regulates ELN self-assembly maturation stage. Interacts with FBLN5 with moderate affinity. Interacts with LOXL1 (via propeptide), LTBP1 and TGFB1 stronger than with LOXL2 and LTBP3. Interacts with PCOLCE. Interacts with collagen type IV trimer (COL4A1-COL4A1-COL4A2), NID2 and moderately with COL15A1-derived endostatin. Interacts with EMILIN1; this interaction promotes the incorporation of EFEMP2 into the extracellular matrix. Interacts with LTBP4; the LTBP4 long form (LTBP4L) has a stronger binding affinity than the LTBP4 short form and the LTBP4 long form promotes fibrillar deposition of EFEMP2. In terms of processing, N-glycosylated; contains mostly complex-type glycans. Not O-glycosylated. Cleaved by ELANE; produces a 50-55 kDa fragment. Cleaved by MMP2 and MMP9; produces several fragments.

The protein resides in the secreted. Its subcellular location is the extracellular space. It localises to the extracellular matrix. The protein localises to the basement membrane. Functionally, plays a crucial role in elastic fiber formation in tissue, and in the formation of ultrastructural connections between elastic laminae and smooth muscle cells in the aorta, therefore participates in terminal differentiation and maturation of smooth muscle cell (SMC) and in the mechanical properties and wall integrity maintenance of the aorta. In addition, is involved in the control of collagen fibril assembly in tissue throught proteolytic activation of LOX leading to cross- linking of collagen and elastin. Also promotes ELN coacervation and participates in the deposition of ELN coacervates on to microfibrils but also regulates ELN cross- linking through LOX interaction. Moreover adheres to the cells through heparin binding in a calcium-dependent manner and regulates vascularlar smooth muscle cells proliferation through angiotensin signaling. This chain is EGF-containing fibulin-like extracellular matrix protein 2, found in Cricetulus griseus (Chinese hamster).